Consider the following 373-residue polypeptide: Protein phosphatase 1K, mitochondrial (373 aa).

The 253-residue stretch at 95 to 347 (KVGCSTQLGK…DNSTAIVVPF (253 aa)) folds into the PPM-type phosphatase domain. Residues D128, G129, and D338 each coordinate Mg(2+).

It belongs to the PP2C family. Mg(2+) is required as a cofactor. Requires Mn(2+) as cofactor.

It localises to the mitochondrion matrix. The catalysed reaction is O-phospho-L-seryl-[protein] + H2O = L-seryl-[protein] + phosphate. It carries out the reaction O-phospho-L-threonyl-[protein] + H2O = L-threonyl-[protein] + phosphate. The chain is Protein phosphatase 1K, mitochondrial (ppm1k) from Xenopus laevis (African clawed frog).